The primary structure comprises 1499 residues: DENN domain-containing protein 4B (1499 aa).

The interval proline 26–glutamate 45 is disordered. The segment covering proline 34 to alanine 44 has biased composition (pro residues). In terms of domain architecture, MABP spans alanine 44 to leucine 203. The uDENN domain occupies valine 195–proline 369. In terms of domain architecture, cDENN spans proline 390–threonine 526. The dDENN domain occupies leucine 528–alanine 644. A disordered region spans residues proline 717–glutamine 744. Residues proline 729–proline 739 are compositionally biased toward low complexity. PPR repeat units follow at residues tryptophan 775–proline 811 and aspartate 812–proline 846. Disordered stretches follow at residues proline 890 to threonine 968, proline 988 to serine 1115, and arginine 1204 to proline 1226. Over residues glutamine 897–glutamine 915 the composition is skewed to low complexity. Residues arginine 933 to alanine 942 show a composition bias toward polar residues. The residue at position 951 (serine 951) is a Phosphoserine. The segment covering isoleucine 1074 to leucine 1083 has biased composition (pro residues). At serine 1090 the chain carries Phosphoserine. Low complexity predominate over residues glycine 1103–serine 1115.

The protein resides in the golgi apparatus. Functionally, guanine nucleotide exchange factor (GEF) which may activate RAB10. Promotes the exchange of GDP to GTP, converting inactive GDP-bound Rab proteins into their active GTP-bound form. The chain is DENN domain-containing protein 4B (Dennd4b) from Mus musculus (Mouse).